The sequence spans 347 residues: NADH-ubiquinone oxidoreductase chain 2 (347 aa).

Transmembrane regions (helical) follow at residues 1-21 (MNPL…AIVA), 25-45 (HWLM…PILM), 59-79 (YFLT…MNLV), 111-131 (FHFW…LILL), 149-169 (INLD…GWGG), 178-198 (IMAY…TYNP), 201-221 (TLLN…MFML), 237-257 (MPLL…LPPL), 274-294 (NSVI…YFYM), and 326-346 (LSPL…LALL).

Belongs to the complex I subunit 2 family. Core subunit of respiratory chain NADH dehydrogenase (Complex I) which is composed of 45 different subunits. Interacts with TMEM242.

The protein localises to the mitochondrion inner membrane. The enzyme catalyses a ubiquinone + NADH + 5 H(+)(in) = a ubiquinol + NAD(+) + 4 H(+)(out). In terms of biological role, core subunit of the mitochondrial membrane respiratory chain NADH dehydrogenase (Complex I) which catalyzes electron transfer from NADH through the respiratory chain, using ubiquinone as an electron acceptor. Essential for the catalytic activity and assembly of complex I. This is NADH-ubiquinone oxidoreductase chain 2 from Pteropus rodricensis (Rodriguez flying fox).